Consider the following 41-residue polypeptide: Mu-conotoxin pn4c (41 aa).

Residues 1 to 24 (DQPAERMQDDISSEHHPFFDPVKR) constitute a propeptide that is removed on maturation.

Belongs to the conotoxin M superfamily. Contains 3 disulfide bonds. They are not added, since framework IV presents two different connectivities (I-V, II-III, IV-VI and I-III, II-V, IV-VI). As to expression, expressed by the venom duct.

The protein resides in the secreted. Functionally, mu-conotoxins block voltage-gated sodium channels (Nav). Blocks reversibly sodium channels in molluskan neurons, but has no effect on sodium currents in bovine chromaffin cells or in rat brain synaptosomes. Induces paralysis in mollusks (C.retripictus). This Conus pennaceus (Feathered cone) protein is Mu-conotoxin pn4c.